Consider the following 403-residue polypeptide: Glycerophosphocholine acyltransferase 1 (403 aa).

Residues 1–112 (MDHLEFDENT…SGKVVRFRDK (112 aa)) are Cytoplasmic-facing. The helical transmembrane segment at 113 to 133 (LSFALGVSTCILTALLVGMAP) threads the bilayer. Residues 134–137 (ESMH) are Lumenal-facing. Residues 138–155 (LWYTIQLFVYLPLRYYTY) form a helical membrane-spanning segment. At 156–161 (QRKGYE) the chain is on the cytoplasmic side. The chain crosses the membrane as a helical span at residues 162–182 (YFIADFCYWGNILLLVYIWIF). At 183-186 (PESR) the chain is on the lumenal side. Residues 187–207 (RLFILSYSISYGTLAWSVVAW) form a helical membrane-spanning segment. The Cytoplasmic portion of the chain corresponds to 208–218 (RNSLLFHSIDK). A helical transmembrane segment spans residues 219–239 (ITSLFIHFFPPLVLHTIVHLT). A glycan (N-linked (GlcNAc...) asparagine) is linked at N240. Over 240-262 (NKSYLKDRFPAVLKVKKIDLLSS) the chain is Lumenal. A helical membrane pass occupies residues 263 to 283 (VEIASFFYALWQIWYYFFIQV). The Cytoplasmic portion of the chain corresponds to 284–322 (GKQKQIQEGRPTSFTWLSKAYSKTKLGRAVAKLPQNLQP). Residues 323–343 (FVFMIIQYLYSITTMLPCSLW) form a helical membrane-spanning segment. The Lumenal segment spans residues 344-352 (YNNKLYSTA). A helical membrane pass occupies residues 353–373 (FLALIFGWSVWNGASYYIDVF). The Cytoplasmic segment spans residues 374–403 (GRRFQKELEALRQQLAETPTNSGSSSALSR).

The protein belongs to the GPC1 family.

Its subcellular location is the endoplasmic reticulum membrane. It is found in the golgi apparatus membrane. It carries out the reaction sn-glycerol 3-phosphocholine + an acyl-CoA = a 1-acyl-sn-glycero-3-phosphocholine + CoA. The catalysed reaction is sn-glycero-3-phosphoethanolamine + an acyl-CoA = a monoacyl-sn-glycero-3-phosphoethanolamine + CoA. The enzyme catalyses sn-glycero-3-phosphoethanolamine + (9Z)-octadecenoyl-CoA = (9Z-octadecenoyl)-sn-glycero-3-phosphoethanolamine + CoA. Glycerophosphocholine acyltransferase (GPCAT) that utilizes acyl-CoA to acylate glycero-3-phosphocholine (GPC), forming lysophosphatidylcholine (LPC). Shows broad acyl specificities with a preference for 16:0-CoA, polyunsaturated acyl-CoA, and the hydroxylated ricinoleoyl-CoA. Also catalyzes the acylation of glycero-3-phosphoethanolamine (GPE) with acyl-CoA. In addition to acyl-CoA, GPCAT efficiently utilizes LPC and lysophosphatidylethanolamine (LPE) as acyl donors in the acylation of GPC. Contributes to the maintenance of phosphatidylcholine (PC) homeostasis and might also have specific functions in acyl editing of PC, such as transferring acyl groups modified at the sn-2 position of PC to the sn-1. In Schizosaccharomyces pombe (strain 972 / ATCC 24843) (Fission yeast), this protein is Glycerophosphocholine acyltransferase 1.